A 481-amino-acid chain; its full sequence is Zinc metalloproteinase/disintegrin (481 aa).

Residues 1–20 (MIQVLLVTICLAVFPYQGSS) form the signal peptide. Positions 21 to 190 (IILESGNVDD…KASQLYLTPE (170 aa)) are excised as a propeptide. The 196-residue stretch at 197–392 (RYIKLAIVVD…DNPQCILNAP (196 aa)) folds into the Peptidase M12B domain. 3 cysteine pairs are disulfide-bonded: C308/C387, C349/C371, and C351/C354. Residue H333 participates in Zn(2+) binding. E334 is an active-site residue. H337 and H343 together coordinate Zn(2+). A propeptide spanning residues 393–408 (LRTDTVSTPVSGNEFL) is cleaved from the precursor. The region spanning 400-481 (TPVSGNEFLE…GDCPRNPFHA (82 aa)) is the Disintegrin domain. Intrachain disulfides connect C414–C429, C416–C424, C423–C446, C437–C443, C442–C467, and C455–C474. Positions 459-461 (RGD) match the Cell attachment site motif.

It belongs to the venom metalloproteinase (M12B) family. P-II subfamily. P-IIa sub-subfamily. In terms of assembly, monomer. The cofactor is Zn(2+). In terms of tissue distribution, expressed by the venom gland.

The protein localises to the secreted. Impairs hemostasis in the envenomed animal. In terms of biological role, disintegrin elegantin-2a-f: inhibits platelet aggregation induced by ADP, thrombin, platelet-activating factor and collagen. Acts by inhibiting fibrinogen interaction with platelet receptors GPIIb/GPIIIa (ITGA2B/ITGB3). The protein is Zinc metalloproteinase/disintegrin of Protobothrops elegans (Elegant pitviper).